We begin with the raw amino-acid sequence, 379 residues long: tRNA-specific 2-thiouridylase MnmA (379 aa).

ATP-binding positions include 6–13 and L32; that span reads AMSGGVDS. The Nucleophile role is filled by C101. C101 and C199 are joined by a disulfide. G125 provides a ligand contact to ATP. Residues 148–150 form an interaction with tRNA region; sequence KDQ. C199 serves as the catalytic Cysteine persulfide intermediate.

This sequence belongs to the MnmA/TRMU family.

The protein localises to the cytoplasm. The catalysed reaction is S-sulfanyl-L-cysteinyl-[protein] + uridine(34) in tRNA + AH2 + ATP = 2-thiouridine(34) in tRNA + L-cysteinyl-[protein] + A + AMP + diphosphate + H(+). In terms of biological role, catalyzes the 2-thiolation of uridine at the wobble position (U34) of tRNA, leading to the formation of s(2)U34. In Paenarthrobacter aurescens (strain TC1), this protein is tRNA-specific 2-thiouridylase MnmA.